Here is a 227-residue protein sequence, read N- to C-terminus: PKHD-type hydroxylase Bcen_3557 (227 aa).

The region spanning 78–178 is the Fe2OG dioxygenase domain; that stretch reads KVFPPLFNRY…RVASFFWIQS (101 aa). Residues His-96, Asp-98, and His-159 each contribute to the Fe cation site. Arg-169 is a 2-oxoglutarate binding site.

It depends on Fe(2+) as a cofactor. Requires L-ascorbate as cofactor.

This Burkholderia orbicola (strain AU 1054) protein is PKHD-type hydroxylase Bcen_3557.